The following is a 201-amino-acid chain: uncharacterized protein (201 aa).

The signal sequence occupies residues 1–19 (MKLIVSVFLIGCQFLNILG).

This is an uncharacterized protein from Acheta domesticus (House cricket).